Reading from the N-terminus, the 140-residue chain is Profilin-2 (140 aa).

At A2 the chain carries N-acetylalanine.

This sequence belongs to the profilin family. In terms of assembly, occurs in many kinds of cells as a complex with monomeric actin in a 1:1 ratio. Interacts with PFN2. As to quaternary structure, interacts with ACTMAP (via N-terminus); the interaction may facilitate efficient cleavage of the acetylated N-terminus of immature actin by ACTMAP. As to expression, highly expressed in brain, skeletal muscle and kidney and less strongly in heart, placenta, lung and liver.

The protein localises to the cytoplasm. Its subcellular location is the cytoskeleton. In terms of biological role, binds to actin and affects the structure of the cytoskeleton. At high concentrations, profilin prevents the polymerization of actin, whereas it enhances it at low concentrations. By binding to PIP2, it inhibits the formation of IP3 and DG. In Homo sapiens (Human), this protein is Profilin-2 (PFN2).